Consider the following 510-residue polypeptide: ATP synthase subunit alpha, chloroplastic (510 aa).

170–177 (GDRQTGKT) lines the ATP pocket.

The protein belongs to the ATPase alpha/beta chains family. In terms of assembly, F-type ATPases have 2 components, CF(1) - the catalytic core - and CF(0) - the membrane proton channel. CF(1) has five subunits: alpha(3), beta(3), gamma(1), delta(1), epsilon(1). CF(0) has four main subunits: a, b, b' and c.

Its subcellular location is the plastid. The protein localises to the chloroplast thylakoid membrane. The catalysed reaction is ATP + H2O + 4 H(+)(in) = ADP + phosphate + 5 H(+)(out). Functionally, produces ATP from ADP in the presence of a proton gradient across the membrane. The alpha chain is a regulatory subunit. This is ATP synthase subunit alpha, chloroplastic from Phaseolus vulgaris (Kidney bean).